The following is a 304-amino-acid chain: Acetyl-coenzyme A carboxylase carboxyl transferase subunit beta (304 aa).

A CoA carboxyltransferase N-terminal domain is found at 52 to 304 (EVTKCPSCGV…TIFKVLNDII (253 aa)). Zn(2+)-binding residues include cysteine 56, cysteine 59, cysteine 75, and cysteine 78. The C4-type zinc-finger motif lies at 56–78 (CPSCGVLSHKSEIRANMKMCSNC).

Belongs to the AccD/PCCB family. In terms of assembly, acetyl-CoA carboxylase is a heterohexamer composed of biotin carboxyl carrier protein (AccB), biotin carboxylase (AccC) and two subunits each of ACCase subunit alpha (AccA) and ACCase subunit beta (AccD). It depends on Zn(2+) as a cofactor.

The protein localises to the cytoplasm. It carries out the reaction N(6)-carboxybiotinyl-L-lysyl-[protein] + acetyl-CoA = N(6)-biotinyl-L-lysyl-[protein] + malonyl-CoA. The protein operates within lipid metabolism; malonyl-CoA biosynthesis; malonyl-CoA from acetyl-CoA: step 1/1. Functionally, component of the acetyl coenzyme A carboxylase (ACC) complex. Biotin carboxylase (BC) catalyzes the carboxylation of biotin on its carrier protein (BCCP) and then the CO(2) group is transferred by the transcarboxylase to acetyl-CoA to form malonyl-CoA. This is Acetyl-coenzyme A carboxylase carboxyl transferase subunit beta from Fusobacterium nucleatum subsp. nucleatum (strain ATCC 25586 / DSM 15643 / BCRC 10681 / CIP 101130 / JCM 8532 / KCTC 2640 / LMG 13131 / VPI 4355).